A 306-amino-acid chain; its full sequence is Mitochondrial basic amino acids transporter (306 aa).

A run of 6 helical transmembrane segments spans residues 2–22, 61–81, 96–116, 153–172, 187–207, and 255–275; these read ALDF…GHPF, GLGS…GVQG, FLAG…MELA, GMVS…FLTY, LLVP…WLST, and LLRA…VLTY. Solcar repeat units follow at residues 2–86, 90–178, and 190–275; these read ALDF…TLRA, DSPL…LTRA, and PKLL…VLTY. A disordered region spans residues 283–306; that stretch reads VDSEAAPGASTTPAGPALAQPSSL. Positions 287–306 are enriched in low complexity; the sequence is AAPGASTTPAGPALAQPSSL.

This sequence belongs to the mitochondrial carrier (TC 2.A.29) family.

It is found in the mitochondrion inner membrane. The enzyme catalyses L-lysine(out) + L-arginine(in) = L-lysine(in) + L-arginine(out). It carries out the reaction L-histidine(out) + L-arginine(in) = L-histidine(in) + L-arginine(out). It catalyses the reaction L-ornithine(in) + L-arginine(out) = L-ornithine(out) + L-arginine(in). The catalysed reaction is L-homoarginine(in) + L-arginine(out) = L-homoarginine(out) + L-arginine(in). The enzyme catalyses N(omega)-methyl-L-arginine(in) + L-arginine(out) = N(omega)-methyl-L-arginine(out) + L-arginine(in). It carries out the reaction L-arginine(in) = L-arginine(out). It catalyses the reaction L-lysine(in) = L-lysine(out). The catalysed reaction is L-ornithine(in) = L-ornithine(out). The enzyme catalyses L-histidine(out) = L-histidine(in). Functionally, mitochondrial transporter of arginine, lysine, homoarginine, methylarginine and, to a much lesser extent, ornithine and histidine. Does not transport carnitine nor acylcarnitines. Functions by both counter-exchange and uniport mechanisms. Plays a physiological role in the import of basic amino acids into mitochondria for mitochondrial protein synthesis and amino acid degradation. The sequence is that of Mitochondrial basic amino acids transporter (Slc25a29) from Rattus norvegicus (Rat).